Here is a 341-residue protein sequence, read N- to C-terminus: MAQITAKLVKELRERTGAGVMDAKKALVEVDGDMDKAIQYLRDKGMAKAAKKADRVAAEGLTGVYVNGNVAAITEVNSETDFVSSNDKFVNLVKDATKTIAEGQPADMEAAKKLKMDDGSTLDQAFVNATATIGEKIVLRRFALEKKNDDQEFGAYQHNGGQIGVITVLEGADAATAKHLAMHIAAMKPKVISPEELDDQFITDQLAVMNHKIDQDNESRALVHKKPLPHLVYGSEKQLTDDVLAKAKEDIKAELKEEGKPEKIWDRIIPGKMQRFIDDNTQVDKHFAVLSQDYIMDDSKTVGEFLKEKGAKLVAFQRFEVGEGIEKKQEDFAAEVREQMK.

Residues threonine 80–valine 83 are involved in Mg(2+) ion dislocation from EF-Tu.

This sequence belongs to the EF-Ts family.

It localises to the cytoplasm. In terms of biological role, associates with the EF-Tu.GDP complex and induces the exchange of GDP to GTP. It remains bound to the aminoacyl-tRNA.EF-Tu.GTP complex up to the GTP hydrolysis stage on the ribosome. The polypeptide is Elongation factor Ts (Lactobacillus helveticus (strain DPC 4571)).